The chain runs to 365 residues: Heme A synthase (365 aa).

8 consecutive transmembrane segments (helical) span residues 17-37, 107-127, 132-152, 164-184, 203-223, 264-283, 296-316, and 320-340; these read AVRI…LVGG, VIGI…AIGP, ALWG…WMVA, VRLA…VWTL, AIAL…VAGL, QFDH…WHAI, GALW…LTVL, and PIGL…LAVL. His-267 is a heme binding site. His-327 lines the heme pocket.

The protein belongs to the COX15/CtaA family. Type 2 subfamily. In terms of assembly, interacts with CtaB. Heme b is required as a cofactor.

Its subcellular location is the cell membrane. It catalyses the reaction Fe(II)-heme o + 2 A + H2O = Fe(II)-heme a + 2 AH2. The protein operates within porphyrin-containing compound metabolism; heme A biosynthesis; heme A from heme O: step 1/1. In terms of biological role, catalyzes the conversion of heme O to heme A by two successive hydroxylations of the methyl group at C8. The first hydroxylation forms heme I, the second hydroxylation results in an unstable dihydroxymethyl group, which spontaneously dehydrates, resulting in the formyl group of heme A. In Rhodopseudomonas palustris (strain HaA2), this protein is Heme A synthase.